The chain runs to 2671 residues: Stalled ribosome sensor GCN1 (2671 aa).

Alanine 2 carries the post-translational modification N-acetylalanine. HEAT repeat units follow at residues 140-178, 257-293, 294-331, 385-423, 425-459, 460-500, 560-597, 599-636, 700-732, and 733-772; these read NKLV…ENPG, EFKD…LDLS, QYAL…QCSD, CVAE…EVPK, LTDW…GDTL, LQAL…SKLS, SKVQ…SLGG, KLAN…MGKT, AFIT…SLSV, and LSPD…PAGE. Serine 729 is modified (phosphoserine). Serine 786 bears the Phosphoserine mark. The stretch at 804–865 forms a coiled coil; it reads QIIEMELKEE…EAALGLLDAI (62 aa). HEAT repeat units follow at residues 879 to 918, 979 to 1016, 1035 to 1072, 1078 to 1115, 1155 to 1192, 1210 to 1250, 1251 to 1289, 1290 to 1332, 1335 to 1372, 1374 to 1410, 1413 to 1451, 1455 to 1492, 1493 to 1530, 1534 to 1571, 1573 to 1609, 1611 to 1648, 1653 to 1690, 1692 to 1729, 1731 to 1769, 1773 to 1810, 1812 to 1848, 1921 to 1958, 1959 to 1996, 2001 to 2038, 2039 to 2074, 2076 to 2108, 2111 to 2146, 2147 to 2184, 2188 to 2225, 2259 to 2296, 2301 to 2338, 2339 to 2380, 2382 to 2417, 2422 to 2459, 2546 to 2583, 2588 to 2625, and 2627 to 2661; these read VLVD…TLGT, SLVF…HAQL, LPRV…SSSG, FAEQ…VLPS, DLQS…RYQR, YRPP…YLDS, SQVK…AHGK, ENVN…HLDK, PKVK…AVKE, AGGM…GLGI, LKQQ…MLGK, PYVV…NLSA, HGVK…CAPK, SCLP…VIRN, EILA…HFID, PSLA…LTDQ, PYLP…GMGE, CFED…GLGV, KLEK…TFGD, PYVG…MYAE, AIAL…HISG, EILP…KLGE, KILP…STSR, FFSE…TIGH, QALE…VKSR, VLPY…LTRH, VILP…VEDD, TGHR…RSKA, SHLR…KLDA, RGVT…LTSA, PSVV…GKVG, IALK…IHVK, DPLF…GAGS, AIRK…FLTD, QLPP…EPRP, QTIK…MRRG, and ELLQ…QADS. The tract at residues 2260–2408 is RWDBD region; the sequence is GVTSILPVLR…GIRDTMLQAL (149 aa). Serine 2276 carries the post-translational modification Phosphoserine.

It belongs to the GCN1 family. Interacts with EIF2AK4/GCN2; this interaction stimulates the EIF2AK4/GCN2 kinase activity and is impaired by IMPACT upon a variety of stress conditions, such as amino acid depletion, UV-C irradiation, proteasome inhibitor treatment and glucose deprivation. Interacts with IMPACT; this prevents the interaction of GCN1 with EIF2AK4/GCN2 and inhibits EIF2AK4/GCN2 kinase activity. Interacts with RNF14; interaction takes place following ribosome stalling and promotes recruitment of RNF14. As to expression, expressed in the hypothalamus, cortex and hippocampus.

It is found in the cytoplasm. Functionally, ribosome collision sensor that plays a key role in the RNF14-RNF25 translation quality control pathway, a pathway that takes place when a ribosome has stalled during translation, and which promotes ubiquitination and degradation of translation factors on stalled ribosomes. Directly binds to the ribosome and acts as a sentinel for colliding ribosomes: activated following ribosome stalling and promotes recruitment of RNF14, which directly ubiquitinates EEF1A1/eEF1A, leading to its degradation. In addition to EEF1A1/eEF1A, the RNF14-RNF25 translation quality control pathway mediates degradation of ETF1/eRF1 and ubiquitination of ribosomal protein. GCN1 also acts as a positive activator of the integrated stress response (ISR) by mediating activation of EIF2AK4/GCN2 in response to amino acid starvation. Interaction with EIF2AK4/GCN2 on translating ribosomes stimulates EIF2AK4/GCN2 kinase activity, leading to phosphorylation of eukaryotic translation initiation factor 2 (eIF-2-alpha/EIF2S1). EIF2S1/eIF-2-alpha phosphorylation converts EIF2S1/eIF-2-alpha into a global protein synthesis inhibitor, leading to a global attenuation of cap-dependent translation, and thus to a reduced overall utilization of amino acids, while concomitantly initiating the preferential translation of ISR-specific mRNAs, such as the transcriptional activator ATF4, and hence allowing ATF4-mediated reprogramming of amino acid biosynthetic gene expression to alleviate nutrient depletion. In Mus musculus (Mouse), this protein is Stalled ribosome sensor GCN1.